The sequence spans 278 residues: HTH-type transcriptional activator RhaS (278 aa).

An HTH araC/xylS-type domain is found at 174-272 (NLLLAWLEDH…NWSPRDIRQG (99 aa)). 2 consecutive DNA-binding regions (H-T-H motif) follow at residues 191–212 (DAVA…KQQT) and 239–262 (VTDI…RREF).

Binds DNA as a dimer.

Its subcellular location is the cytoplasm. Activates expression of the rhaBAD and rhaT operons. The polypeptide is HTH-type transcriptional activator RhaS (Escherichia coli O81 (strain ED1a)).